Consider the following 189-residue polypeptide: UPF0398 protein BH1768 (189 aa).

This sequence belongs to the UPF0398 family.

In Halalkalibacterium halodurans (strain ATCC BAA-125 / DSM 18197 / FERM 7344 / JCM 9153 / C-125) (Bacillus halodurans), this protein is UPF0398 protein BH1768.